A 502-amino-acid chain; its full sequence is Lysine--tRNA ligase (502 aa).

Positions 398 and 405 each coordinate Mg(2+).

Belongs to the class-II aminoacyl-tRNA synthetase family. Homodimer. The cofactor is Mg(2+).

It is found in the cytoplasm. The catalysed reaction is tRNA(Lys) + L-lysine + ATP = L-lysyl-tRNA(Lys) + AMP + diphosphate. The chain is Lysine--tRNA ligase from Thermosipho africanus (strain TCF52B).